We begin with the raw amino-acid sequence, 89 residues long: Small ribosomal subunit protein uS15 (89 aa).

This sequence belongs to the universal ribosomal protein uS15 family. In terms of assembly, part of the 30S ribosomal subunit. Forms a bridge to the 50S subunit in the 70S ribosome, contacting the 23S rRNA.

Functionally, one of the primary rRNA binding proteins, it binds directly to 16S rRNA where it helps nucleate assembly of the platform of the 30S subunit by binding and bridging several RNA helices of the 16S rRNA. Its function is as follows. Forms an intersubunit bridge (bridge B4) with the 23S rRNA of the 50S subunit in the ribosome. This Cupriavidus metallidurans (strain ATCC 43123 / DSM 2839 / NBRC 102507 / CH34) (Ralstonia metallidurans) protein is Small ribosomal subunit protein uS15.